Here is a 228-residue protein sequence, read N- to C-terminus: Protein Iojap, chloroplastic (228 aa).

Residues 1–54 (MGGTSAAVPSHGLACAPPAAVTLNPRARRRRASSGSGGHRSSPQQPLRSDLLPP) form a disordered region. The N-terminal 62 residues, 1-62 (MGGTSAAVPS…PPATVACRAR (62 aa)), are a transit peptide targeting the chloroplast.

Belongs to the Iojap/RsfS family. As to quaternary structure, interacts with chloroplast ribosomal protein uL14c (rpl14).

The protein resides in the plastid. It localises to the chloroplast. In terms of biological role, may be a ribosome silencing factor (Potential). Involved in plastid biogenesis. Plastids affected by a mutation in Iojap lose the ability to perform translation and lack plastid ribosomes. In Zea mays (Maize), this protein is Protein Iojap, chloroplastic (Ij).